A 696-amino-acid polypeptide reads, in one-letter code: MTDLSQVPSPYDESKFVTFDGSPFQLYQPYPPAGDQPEAIRQLVEGIGDGLSYQTLLGVTGSGKTYTMANVIAQAGRPAIVFAPNKTLAAQLYSEFREFFPRNAVEYFVSYYDYYQPEAYVPQRDLFIEKDSSVNEHIEQMRLSATKSLLERRDVVIVATVSAIYGIGNPTEYHQMILTLRTGDKISQRDVIARLIAMQYTRNETDFQRGTFRVRGDTVDIFPAEHAEMAVRLELFDDEVDSLQLFDPLTGRVRQKILRFTVYPSSHYVTPRETVLRAIGTIKAELRERLDFFYQENKLVEAQRLEQRTRFDLEMLQELGFCKGIENYSRHLSGAQPGEPPPTLVDYLPSDALMFLDESHVLIGQLNGMYNGDRARKETLSAYGFRLPSALDNRPLKFAEFEGKMRQVVFVSATPADYEKQRAGDEVVEQVVRPTGLVDPIIHVRPATTQVDDLLSEIHERVKAGERVLVTTLTKRMAEQLTEFLSENGVKVRYLHSDIDTVERVEIIRDLRLGTFDVLVGINLLREGLDIPEVSLVAILDADKEGFLRAERSLIQTIGRAARNVNGTAILYGDRITESMKKAIGETERRRAKQIAHNEAHGITPRGVVKRIKDIIDGVYNVDDARAELKAAQDAAKYEDMSEKQVGKEIKRLEKQMLDHAKNLEFEKAAAVRDQLAKLKSQVFGASGEDHIVPAA.

The Helicase ATP-binding domain occupies 45–434 (EGIGDGLSYQ…DEVVEQVVRP (390 aa)). 58-65 (GVTGSGKT) contributes to the ATP binding site. A Beta-hairpin motif is present at residues 111–134 (YYDYYQPEAYVPQRDLFIEKDSSV). The Helicase C-terminal domain occupies 450–616 (QVDDLLSEIH…GVVKRIKDII (167 aa)). The UVR domain occupies 647-682 (GKEIKRLEKQMLDHAKNLEFEKAAAVRDQLAKLKSQ).

This sequence belongs to the UvrB family. Forms a heterotetramer with UvrA during the search for lesions. Interacts with UvrC in an incision complex.

It is found in the cytoplasm. Its function is as follows. The UvrABC repair system catalyzes the recognition and processing of DNA lesions. A damage recognition complex composed of 2 UvrA and 2 UvrB subunits scans DNA for abnormalities. Upon binding of the UvrA(2)B(2) complex to a putative damaged site, the DNA wraps around one UvrB monomer. DNA wrap is dependent on ATP binding by UvrB and probably causes local melting of the DNA helix, facilitating insertion of UvrB beta-hairpin between the DNA strands. Then UvrB probes one DNA strand for the presence of a lesion. If a lesion is found the UvrA subunits dissociate and the UvrB-DNA preincision complex is formed. This complex is subsequently bound by UvrC and the second UvrB is released. If no lesion is found, the DNA wraps around the other UvrB subunit that will check the other stand for damage. The sequence is that of UvrABC system protein B from Ralstonia nicotianae (strain ATCC BAA-1114 / GMI1000) (Ralstonia solanacearum).